A 476-amino-acid chain; its full sequence is MHDNTYLPDHFLHHIAAIMPAHLSMDEFVASCRRPLRRSIRVNTLKISVSDFVMQMQPLGWQFDAVPWCETGFWLTRADESVPLGNTAEHLSGLFYIQEASSMLPVTALFASDQVKRDGMLLDAAAAPGSKTTQIAALMNNQGMLVANEYSSSRLKVLSANIQRCGVTNVGMTHFDAKVFGQWLPETFDAILLDAPCSGEGTVRKDEDALRNWSIESIDEIAAVQQGLLESAFHALKPGGVLVYSTCTLSQQENQAVCQSLLEKFGDALTLDSLADLFPNAEQACTPEGYLHVWPQIFDSEGFFVARLRKHHSVPNTMFKPGKLGKFPFSPLPAKEAEPMLREIEANFGVVPPGQLFGRNDEIWLFPHLFGQVQGKLRFDRIGIKLAETFKKGYRLTHEWALAYGDKATQGVVELDSANAREFMMGRDVWPEQEAGTGEMIVRYQGHTLGMGKWVGSRVKNALPRELVRDNNLFGA.

Residues 125 to 131, glutamate 149, aspartate 176, and aspartate 194 contribute to the S-adenosyl-L-methionine site; that span reads AAAPGSK. Cysteine 247 (nucleophile) is an active-site residue.

It belongs to the class I-like SAM-binding methyltransferase superfamily. RsmB/NOP family.

The protein resides in the cytoplasm. The catalysed reaction is cytidine(1407) in 16S rRNA + S-adenosyl-L-methionine = 5-methylcytidine(1407) in 16S rRNA + S-adenosyl-L-homocysteine + H(+). In terms of biological role, specifically methylates the cytosine at position 1407 (m5C1407) of 16S rRNA. In Aeromonas salmonicida (strain A449), this protein is Ribosomal RNA small subunit methyltransferase F.